A 135-amino-acid polypeptide reads, in one-letter code: uncharacterized protein (135 aa).

The 126-residue stretch at 4-129 (SIVHIALVVN…YGNLWDLLQL (126 aa)) folds into the VOC domain.

This sequence to B.subtilis YwkD.

This is an uncharacterized protein from Shewanella frigidimarina (strain NCIMB 400).